A 668-amino-acid polypeptide reads, in one-letter code: tRNA 5-methylaminomethyl-2-thiouridine biosynthesis bifunctional protein MnmC (668 aa).

Positions 1–245 (MKHYSIQPAN…KREMLCGVME (245 aa)) are tRNA (mnm(5)s(2)U34)-methyltransferase. Positions 270–668 (IGGGIASALL…LLKGKAVKAG (399 aa)) are FAD-dependent cmnm(5)s(2)U34 oxidoreductase.

In the N-terminal section; belongs to the methyltransferase superfamily. tRNA (mnm(5)s(2)U34)-methyltransferase family. The protein in the C-terminal section; belongs to the DAO family. FAD serves as cofactor.

The protein localises to the cytoplasm. The enzyme catalyses 5-aminomethyl-2-thiouridine(34) in tRNA + S-adenosyl-L-methionine = 5-methylaminomethyl-2-thiouridine(34) in tRNA + S-adenosyl-L-homocysteine + H(+). Functionally, catalyzes the last two steps in the biosynthesis of 5-methylaminomethyl-2-thiouridine (mnm(5)s(2)U) at the wobble position (U34) in tRNA. Catalyzes the FAD-dependent demodification of cmnm(5)s(2)U34 to nm(5)s(2)U34, followed by the transfer of a methyl group from S-adenosyl-L-methionine to nm(5)s(2)U34, to form mnm(5)s(2)U34. The sequence is that of tRNA 5-methylaminomethyl-2-thiouridine biosynthesis bifunctional protein MnmC from Escherichia coli (strain K12 / DH10B).